The sequence spans 274 residues: tRNA-cytidine(32) 2-sulfurtransferase (274 aa).

The short motif at 40–45 (SGGKDS) is the PP-loop motif element. The [4Fe-4S] cluster site is built by C115, C118, and C206.

The protein belongs to the TtcA family. As to quaternary structure, homodimer. Mg(2+) is required as a cofactor. [4Fe-4S] cluster serves as cofactor.

It is found in the cytoplasm. It carries out the reaction cytidine(32) in tRNA + S-sulfanyl-L-cysteinyl-[cysteine desulfurase] + AH2 + ATP = 2-thiocytidine(32) in tRNA + L-cysteinyl-[cysteine desulfurase] + A + AMP + diphosphate + H(+). The protein operates within tRNA modification. Its function is as follows. Catalyzes the ATP-dependent 2-thiolation of cytidine in position 32 of tRNA, to form 2-thiocytidine (s(2)C32). The sulfur atoms are provided by the cysteine/cysteine desulfurase (IscS) system. The protein is tRNA-cytidine(32) 2-sulfurtransferase of Pseudomonas putida (strain ATCC 47054 / DSM 6125 / CFBP 8728 / NCIMB 11950 / KT2440).